A 459-amino-acid chain; its full sequence is Paired box protein Pax-8 (459 aa).

A DNA-binding region (paired) is located at residues 9 to 135 (GHGGLNQLGG…SSINRIIRTK (127 aa)). A PAI subdomain region spans residues 12–68 (GLNQLGGAFVNGRPLPEVVRQRIVDLAHQGVRPCDISRQLRVSHGCVSKILGRYYET). An RED subdomain region spans residues 87–135 (KVVEKIGDYKRQNPTMFAWEIRDRLLAEGVCDNDTVPSVSSINRIIRTK). The segment covering 159–182 (LIPSSAVTPPESPQSDSLGSTYSI) has biased composition (polar residues). The disordered stretch occupies residues 159–223 (LIPSSAVTPP…QSSSSGPRKH (65 aa)). Ser-305 bears the Phosphoserine mark.

Interacts with WWTR1.

The protein localises to the nucleus. Functionally, thought to encode a transcription factor. It may have a role in kidney cell differentiation. May play a regulatory role in mammalian development. This Canis lupus familiaris (Dog) protein is Paired box protein Pax-8 (PAX8).